A 373-amino-acid polypeptide reads, in one-letter code: LIM domain-binding protein 1 (373 aa).

2 disordered regions span residues 248–297 (PPAE…LSSQ) and 329–373 (DAAN…QASQ). The span at 266–282 (SGGSTMSSGGGNTNNSN) shows a compositional bias: low complexity. Over residues 288 to 297 (PASTFALSSQ) the composition is skewed to polar residues. Residues 298-337 (DVMVVGEPTLMGGEFGDEDERLITRLENTQFDAANGIDDE) form the LIM interaction domain (LID) domain.

It belongs to the LDB family. Forms homodimers and heterodimers. Interacts with and activates lhx1/lim1. The stoichiometry of lhx1/lim1 and ldb1 is important for their function and an excess of ldb1 can inhibit lhx1/lim1 function. When bound to lhx1/lim1, escapes degradation by rnf12. Interacts with the N-terminal region of rnf12. Undergoes rnf12-mediated ubiquitin-proteasome-dependent degradation.

Its subcellular location is the nucleus. Binds to the LIM domain of a wide variety of LIM domain-containing transcription factors. Acts as a coactivator together with otx2 to stimulate lhx1/lim1-mediated activation of the gsc promoter in the Spemann organizer. Acts synergistically with lhx1/lim1 and ssbp in axis formation. The sequence is that of LIM domain-binding protein 1 from Xenopus tropicalis (Western clawed frog).